The following is a 408-amino-acid chain: NADH-quinone oxidoreductase subunit D (408 aa).

This sequence belongs to the complex I 49 kDa subunit family. In terms of assembly, NDH-1 is composed of 14 different subunits. Subunits NuoB, C, D, E, F, and G constitute the peripheral sector of the complex.

Its subcellular location is the cell inner membrane. It catalyses the reaction a quinone + NADH + 5 H(+)(in) = a quinol + NAD(+) + 4 H(+)(out). In terms of biological role, NDH-1 shuttles electrons from NADH, via FMN and iron-sulfur (Fe-S) centers, to quinones in the respiratory chain. The immediate electron acceptor for the enzyme in this species is believed to be ubiquinone. Couples the redox reaction to proton translocation (for every two electrons transferred, four hydrogen ions are translocated across the cytoplasmic membrane), and thus conserves the redox energy in a proton gradient. The polypeptide is NADH-quinone oxidoreductase subunit D (Campylobacter jejuni subsp. jejuni serotype O:2 (strain ATCC 700819 / NCTC 11168)).